A 442-amino-acid chain; its full sequence is Cytochrome c biogenesis CcmF C-terminal-like mitochondrial protein (442 aa).

3 consecutive transmembrane segments (helical) span residues 6 to 26 (NFFF…PVLL), 39 to 59 (PFFN…LVYL), and 122 to 142 (YLES…FFLA). The interval 151 to 175 (RARRRKGQTLRPNGNEQRRNDKMRC) is disordered. Residues 166-175 (EQRRNDKMRC) are compositionally biased toward basic and acidic residues. The helical transmembrane segment at 411–431 (FIFFIWIGFMLASLGGLPSLL) threads the bilayer.

This sequence belongs to the CcmF/CycK/Ccl1/NrfE/CcsA family. In terms of assembly, interacts with CCMFN2.

The protein localises to the mitochondrion inner membrane. Forms a complex with CCMFN1, CCMFN2 and CCMH that performs the assembly of heme with c-type apocytochromes in mitochondria. This chain is Cytochrome c biogenesis CcmF C-terminal-like mitochondrial protein (CCMFC), found in Arabidopsis thaliana (Mouse-ear cress).